The following is a 273-amino-acid chain: 4-hydroxy-tetrahydrodipicolinate reductase (273 aa).

Residue 11–16 participates in NAD(+) binding; it reads GAGGRM. Arginine 37 provides a ligand contact to NADP(+). NAD(+) contacts are provided by residues 100-102 and 124-127; these read GTT and AANY. Catalysis depends on histidine 157, which acts as the Proton donor/acceptor. (S)-2,3,4,5-tetrahydrodipicolinate is bound at residue histidine 158. The active-site Proton donor is the lysine 161. 167–168 contacts (S)-2,3,4,5-tetrahydrodipicolinate; the sequence is GT.

It belongs to the DapB family.

The protein localises to the cytoplasm. The enzyme catalyses (S)-2,3,4,5-tetrahydrodipicolinate + NAD(+) + H2O = (2S,4S)-4-hydroxy-2,3,4,5-tetrahydrodipicolinate + NADH + H(+). It carries out the reaction (S)-2,3,4,5-tetrahydrodipicolinate + NADP(+) + H2O = (2S,4S)-4-hydroxy-2,3,4,5-tetrahydrodipicolinate + NADPH + H(+). The protein operates within amino-acid biosynthesis; L-lysine biosynthesis via DAP pathway; (S)-tetrahydrodipicolinate from L-aspartate: step 4/4. Catalyzes the conversion of 4-hydroxy-tetrahydrodipicolinate (HTPA) to tetrahydrodipicolinate. This is 4-hydroxy-tetrahydrodipicolinate reductase from Acinetobacter baumannii (strain AB307-0294).